Reading from the N-terminus, the 350-residue chain is Glycolate oxidase subunit GlcE (350 aa).

The region spanning 1 to 173 (MLRECDYSQA…TEISMKVLPR (173 aa)) is the FAD-binding PCMH-type domain.

As to quaternary structure, the glycolate oxidase likely consists of three subunits, GlcD, GlcE and GlcF. The cofactor is FAD.

Its subcellular location is the cell inner membrane. It carries out the reaction glycolate + A = glyoxylate + AH2. The catalysed reaction is (R)-lactate + A = pyruvate + AH2. Its activity is regulated as follows. In vitro the glycolate oxidase activity is inhibited by the sulfhydryl inhibitors CuSO4 and PCMB, by KCN, but not by the metal complexing agent EDTA. Functionally, component of a complex that catalyzes the oxidation of glycolate to glyoxylate. Is required for E.coli to grow on glycolate as a sole source of carbon. Is also able to oxidize D-lactate ((R)-lactate) with a similar rate. Does not link directly to O(2), and 2,6-dichloroindophenol (DCIP) and phenazine methosulfate (PMS) can act as artificial electron acceptors in vitro, but the physiological molecule that functions as a primary electron acceptor during glycolate oxidation is unknown. The sequence is that of Glycolate oxidase subunit GlcE from Escherichia coli (strain K12).